Reading from the N-terminus, the 447-residue chain is Probable protein phosphatase 2C 71 (447 aa).

One can recognise a PPM-type phosphatase domain in the interval 33–279; the sequence is SYGYASSAGK…DNITCVVVRF (247 aa). Residues D69, G70, D231, and D270 each contribute to the Mn(2+) site. Low complexity predominate over residues 284 to 297; that stretch reads SANNNGSSSSEEAN. The tract at residues 284–447 is disordered; it reads SANNNGSSSS…ARKTTPSIFN (164 aa). A compositionally biased stretch (basic and acidic residues) spans 305–331; the sequence is NDSDHKISAKETNQDHTTVNKDLDRNT. Polar residues-rich tracts occupy residues 346–374 and 392–423; these read ADNS…TGEK and KVPN…GSTG. The span at 424 to 438 shows a compositional bias: basic and acidic residues; it reads ERNRKPIKVHSDSAA.

It belongs to the PP2C family. Mg(2+) serves as cofactor. Mn(2+) is required as a cofactor.

It carries out the reaction O-phospho-L-seryl-[protein] + H2O = L-seryl-[protein] + phosphate. The catalysed reaction is O-phospho-L-threonyl-[protein] + H2O = L-threonyl-[protein] + phosphate. In Arabidopsis thaliana (Mouse-ear cress), this protein is Probable protein phosphatase 2C 71.